The chain runs to 156 residues: Small ribosomal subunit protein uS7 (156 aa).

Belongs to the universal ribosomal protein uS7 family. As to quaternary structure, part of the 30S ribosomal subunit. Contacts proteins S9 and S11.

In terms of biological role, one of the primary rRNA binding proteins, it binds directly to 16S rRNA where it nucleates assembly of the head domain of the 30S subunit. Is located at the subunit interface close to the decoding center, probably blocks exit of the E-site tRNA. The protein is Small ribosomal subunit protein uS7 of Campylobacter hominis (strain ATCC BAA-381 / DSM 21671 / CCUG 45161 / LMG 19568 / NCTC 13146 / CH001A).